The primary structure comprises 230 residues: Octanoyltransferase (230 aa).

One can recognise a BPL/LPL catalytic domain in the interval 31–230; that stretch reads PETPDELWIC…GDKLTRYLAP (200 aa). Substrate-binding positions include 70–77, 163–165, and 176–178; these read RGGQVTYH, ALG, and GVA. Catalysis depends on C194, which acts as the Acyl-thioester intermediate.

It belongs to the LipB family.

The protein resides in the cytoplasm. It catalyses the reaction octanoyl-[ACP] + L-lysyl-[protein] = N(6)-octanoyl-L-lysyl-[protein] + holo-[ACP] + H(+). It participates in protein modification; protein lipoylation via endogenous pathway; protein N(6)-(lipoyl)lysine from octanoyl-[acyl-carrier-protein]: step 1/2. In terms of biological role, catalyzes the transfer of endogenously produced octanoic acid from octanoyl-acyl-carrier-protein onto the lipoyl domains of lipoate-dependent enzymes. Lipoyl-ACP can also act as a substrate although octanoyl-ACP is likely to be the physiological substrate. The sequence is that of Octanoyltransferase from Albidiferax ferrireducens (strain ATCC BAA-621 / DSM 15236 / T118) (Rhodoferax ferrireducens).